We begin with the raw amino-acid sequence, 123 residues long: Cell division protein SepF (123 aa).

Belongs to the SepF family. In terms of assembly, homodimer. Interacts with FtsZ.

It localises to the cytoplasm. Cell division protein that is part of the divisome complex and is recruited early to the Z-ring. Probably stimulates Z-ring formation, perhaps through the cross-linking of FtsZ protofilaments. Its function overlaps with FtsA. The polypeptide is Cell division protein SepF (Tropheryma whipplei (strain TW08/27) (Whipple's bacillus)).